Reading from the N-terminus, the 326-residue chain is MACARGTVAPPVRASIDVSLVVVVHGGGASNISANRKELVREGIARAATEGYKILKAGGSAVDAVEGAVTVLENDPEFNAGYGSVLNVNGDIEMDASIMDGKDLSAGAVSAVRCIANPVKLARLVMEKTPHCFLTGHGAEKFAEDMGIPQVPVEKLITERTKKHLEKEKLEKGAQNADCPKNSGTVGAVALDCRGNLAYATSTGGIVNKMVGRVGDSPCIGAGGYADNNLGAVSTTGHGESILKVNLARLALFHVEQGKTVEEAAQLALDYMKSKLKGLGGLILVNKTGDWVAKWTSASMPWAAVKNGKLQAGIDLCETRTRDLPC.

Catalysis depends on Thr-185, which acts as the Nucleophile. Substrate contacts are provided by residues 213 to 216 (RVGD) and 236 to 239 (TGHG).

This sequence belongs to the Ntn-hydrolase family. As to quaternary structure, heterodimer of an alpha and beta chain produced by autocleavage. This heterodimer may then dimerize in turn, giving rise to a heterotetramer. Cleaved into an alpha and beta chain by autocatalysis; this activates the enzyme. The N-terminal residue of the beta subunit is responsible for the nucleophile hydrolase activity. As to expression, high expression in the heart and brain while low to minimal expression in the other tissues. In ocular tissues, high levels is observed in the optic nerve and retina while relatively low levels of expression are detected in the iris-ciliary body, lens or retinal pigment epithelium.

The protein resides in the cytoplasm. The enzyme catalyses L-asparagine + H2O = L-aspartate + NH4(+). The catalysed reaction is Cleavage of a beta-linked Asp residue from the N-terminus of a polypeptide.. In terms of biological role, has both L-asparaginase and beta-aspartyl peptidase activity. May be involved in the production of L-aspartate, which can act as an excitatory neurotransmitter in some brain regions. Is highly active with L-Asp beta-methyl ester. Besides, has catalytic activity toward beta-aspartyl dipeptides and their methyl esters, including beta-L-Asp-L-Phe, beta-L-Asp-L-Phe methyl ester (aspartame), beta-L-Asp-L-Ala, beta-L-Asp-L-Leu and beta-L-Asp-L-Lys. Does not have aspartylglucosaminidase activity and is inactive toward GlcNAc-L-Asn. Likewise, has no activity toward glutamine. The sequence is that of Isoaspartyl peptidase/L-asparaginase (Asrgl1) from Mus musculus (Mouse).